The sequence spans 310 residues: DNA damage-repair/toleration protein DRT102 (310 aa).

The residue at position 2 (A2) is an N-acetylalanine. Residues 219 to 282 enclose the Cupin type-2 domain; sequence IVRFKAGSVE…HRVKYHEDTE (64 aa).

The sequence is that of DNA damage-repair/toleration protein DRT102 (DRT102) from Arabidopsis thaliana (Mouse-ear cress).